We begin with the raw amino-acid sequence, 1198 residues long: Fibronectin type-III domain-containing protein 3A (1198 aa).

Positions 160–221 (YGDVDAHSTH…PSPINEHNGL (62 aa)) are disordered. The segment covering 163-201 (VDAHSTHGRSNFRDERSSKTYERLQKKLKDRQGTQKDKM) has biased composition (basic and acidic residues). Over residues 202–214 (SSPPSSPQKCPSP) the composition is skewed to low complexity. Residues Ser-203, Ser-207, and Ser-213 each carry the phosphoserine modification. Fibronectin type-III domains are found at residues 268-369 (NIVK…TLSC), 373-465 (IPNP…TSGC), 469-562 (MPAS…TCPD), 566-660 (IPVK…TPAV), 664-757 (PCLP…TAPG), 761-851 (QCKP…TPPS), 861-950 (EISD…TKPL), 951-1045 (PPDP…TPKS), and 1046-1151 (VPAA…TEPP). Lys-384 bears the N6-acetyllysine mark. A helical membrane pass occupies residues 1177-1197 (ILVLFAFFSILIAFIIQYFVI).

The protein belongs to the FNDC3 family. In terms of tissue distribution, expressed in the odontoblast and nerves in the dental pulp. Also expressed in trachea and to a lesser extent in the brain, liver, lung and kidney.

Its subcellular location is the golgi apparatus membrane. Its function is as follows. Mediates spermatid-Sertoli adhesion during spermatogenesis. The protein is Fibronectin type-III domain-containing protein 3A (FNDC3A) of Homo sapiens (Human).